The chain runs to 131 residues: Large ribosomal subunit protein bL12c (131 aa).

Residues 106–125 (KDNTNKENSEEIKQQLEEAG) show a composition bias toward basic and acidic residues. The interval 106-131 (KDNTNKENSEEIKQQLEEAGAKVSIK) is disordered.

This sequence belongs to the bacterial ribosomal protein bL12 family. As to quaternary structure, homodimer. Part of the ribosomal stalk of the 50S ribosomal subunit. Forms a multimeric L10(L12)X complex, where L10 forms an elongated spine to which 2 to 4 L12 dimers bind in a sequential fashion. Binds GTP-bound translation factors.

It localises to the plastid. Its subcellular location is the chloroplast. Forms part of the ribosomal stalk which helps the ribosome interact with GTP-bound translation factors. Is thus essential for accurate translation. The protein is Large ribosomal subunit protein bL12c of Gracilaria tenuistipitata var. liui (Red alga).